Here is a 614-residue protein sequence, read N- to C-terminus: Chaperone protein DnaK (614 aa).

At threonine 175 the chain carries Phosphothreonine; by autocatalysis. The interval 577-614 is disordered; the sequence is QAGGAEGAADPNAAAGGAQSAPHDDNVVDADFKVDEDK. Residues 583–597 show a composition bias toward low complexity; the sequence is GAADPNAAAGGAQSA. A compositionally biased stretch (basic and acidic residues) spans 598–614; that stretch reads PHDDNVVDADFKVDEDK.

It belongs to the heat shock protein 70 family.

Its function is as follows. Acts as a chaperone. In Clostridium beijerinckii (strain ATCC 51743 / NCIMB 8052) (Clostridium acetobutylicum), this protein is Chaperone protein DnaK.